Consider the following 833-residue polypeptide: Protein PAT1 homolog 1 (833 aa).

3 disordered regions span residues 279 to 313 (DMRE…MHGM), 398 to 427 (NIRQ…SGMP), and 492 to 549 (EEAT…DKKL). The segment covering 303 to 313 (PSLSPGGMHGM) has biased composition (low complexity). A compositionally biased stretch (polar residues) spans 398–408 (NIRQNGPQFSH).

This sequence belongs to the PAT1 family.

The protein resides in the cytoplasm. It is found in the P-body. Its function is as follows. RNA-binding protein involved in deadenylation-dependent decapping of mRNAs, leading to the degradation of mRNAs. Acts as a scaffold protein that connects deadenylation and decapping machinery. Required for the recruitment of P-body components such as cgh-1 in somatic blastomeres. May play a role in recruiting the decapping enzyme dcap-1 to cytoplasmic puncta in the cell body of the posterior touch receptor neuron, PLM. This is Protein PAT1 homolog 1 from Caenorhabditis elegans.